We begin with the raw amino-acid sequence, 151 residues long: Ribosome maturation factor RimP (151 aa).

This sequence belongs to the RimP family.

It localises to the cytoplasm. Required for maturation of 30S ribosomal subunits. This is Ribosome maturation factor RimP from Vibrio vulnificus (strain CMCP6).